The primary structure comprises 285 residues: 4-hydroxybenzoate octaprenyltransferase (285 aa).

8 consecutive transmembrane segments (helical) span residues L28–V48, I86–V106, N110–F130, F133–F153, W165–V185, I210–L230, W232–I252, and A262–I284.

This sequence belongs to the UbiA prenyltransferase family. Mg(2+) serves as cofactor.

The protein resides in the cell inner membrane. The catalysed reaction is all-trans-octaprenyl diphosphate + 4-hydroxybenzoate = 4-hydroxy-3-(all-trans-octaprenyl)benzoate + diphosphate. Its pathway is cofactor biosynthesis; ubiquinone biosynthesis. Its function is as follows. Catalyzes the prenylation of para-hydroxybenzoate (PHB) with an all-trans polyprenyl group. Mediates the second step in the final reaction sequence of ubiquinone-8 (UQ-8) biosynthesis, which is the condensation of the polyisoprenoid side chain with PHB, generating the first membrane-bound Q intermediate 3-octaprenyl-4-hydroxybenzoate. This Cupriavidus necator (strain ATCC 17699 / DSM 428 / KCTC 22496 / NCIMB 10442 / H16 / Stanier 337) (Ralstonia eutropha) protein is 4-hydroxybenzoate octaprenyltransferase.